A 64-amino-acid chain; its full sequence is Relaxin (64 aa).

Intrachain disulfides connect Cys11–Cys51, Cys23–Cys64, and Cys50–Cys55.

This sequence belongs to the insulin family. As to quaternary structure, heterodimer of a B chain and an A chain linked by two disulfide bonds.

It localises to the secreted. This chain is Relaxin, found in Leucoraja erinaceus (Little skate).